A 158-amino-acid polypeptide reads, in one-letter code: NAD(P)H-quinone oxidoreductase subunit J, chloroplastic (158 aa).

This sequence belongs to the complex I 30 kDa subunit family. NDH is composed of at least 16 different subunits, 5 of which are encoded in the nucleus.

Its subcellular location is the plastid. It is found in the chloroplast thylakoid membrane. It carries out the reaction a plastoquinone + NADH + (n+1) H(+)(in) = a plastoquinol + NAD(+) + n H(+)(out). It catalyses the reaction a plastoquinone + NADPH + (n+1) H(+)(in) = a plastoquinol + NADP(+) + n H(+)(out). Its function is as follows. NDH shuttles electrons from NAD(P)H:plastoquinone, via FMN and iron-sulfur (Fe-S) centers, to quinones in the photosynthetic chain and possibly in a chloroplast respiratory chain. The immediate electron acceptor for the enzyme in this species is believed to be plastoquinone. Couples the redox reaction to proton translocation, and thus conserves the redox energy in a proton gradient. In Gossypium barbadense (Sea Island cotton), this protein is NAD(P)H-quinone oxidoreductase subunit J, chloroplastic.